The sequence spans 909 residues: NADH-quinone oxidoreductase subunit G (909 aa).

The 83-residue stretch at 1-83 (MATIYVDGKE…GTYISIEDEE (83 aa)) folds into the 2Fe-2S ferredoxin-type domain. Residues Cys-34, Cys-45, Cys-48, and Cys-67 each contribute to the [2Fe-2S] cluster site. Residues 83-122 (EAKEFRKCVVEWQMTNHPHDCPVCEEGGACHLQDMTVMTG) enclose the 4Fe-4S His(Cys)3-ligated-type domain. His-99, Cys-103, Cys-106, Cys-112, Cys-151, Cys-154, Cys-157, Cys-201, Cys-228, Cys-231, Cys-235, and Cys-263 together coordinate [4Fe-4S] cluster. Positions 221–277 (MQFAPSICQQCSVGCNISPGERYGELRRIENRFHGSVNHYFLCDRGRFGYGYVNLPD) constitute a 4Fe-4S Mo/W bis-MGD-type domain.

It belongs to the complex I 75 kDa subunit family. As to quaternary structure, composed of 13 different subunits. Subunits NuoCD, E, F, and G constitute the peripheral sector of the complex. The cofactor is [2Fe-2S] cluster. [4Fe-4S] cluster serves as cofactor.

The catalysed reaction is a quinone + NADH + 5 H(+)(in) = a quinol + NAD(+) + 4 H(+)(out). In terms of biological role, NDH-1 shuttles electrons from NADH, via FMN and iron-sulfur (Fe-S) centers, to quinones in the respiratory chain. The immediate electron acceptor for the enzyme in this species is believed to be ubiquinone. Couples the redox reaction to proton translocation (for every two electrons transferred, four hydrogen ions are translocated across the cytoplasmic membrane), and thus conserves the redox energy in a proton gradient. This is NADH-quinone oxidoreductase subunit G (nuoG) from Shewanella oneidensis (strain ATCC 700550 / JCM 31522 / CIP 106686 / LMG 19005 / NCIMB 14063 / MR-1).